We begin with the raw amino-acid sequence, 1141 residues long: DNA-directed RNA polymerase subunit beta (1141 aa).

2 stretches are compositionally biased toward acidic residues: residues Glu-1063 to Ser-1074 and Gly-1096 to Glu-1141. The interval Glu-1063 to Glu-1141 is disordered.

Belongs to the RNA polymerase beta chain family. In terms of assembly, the RNAP catalytic core consists of 2 alpha, 1 beta, 1 beta' and 1 omega subunit. When a sigma factor is associated with the core the holoenzyme is formed, which can initiate transcription.

It carries out the reaction RNA(n) + a ribonucleoside 5'-triphosphate = RNA(n+1) + diphosphate. Its function is as follows. DNA-dependent RNA polymerase catalyzes the transcription of DNA into RNA using the four ribonucleoside triphosphates as substrates. In Moorella thermoacetica (strain ATCC 39073 / JCM 9320), this protein is DNA-directed RNA polymerase subunit beta.